A 707-amino-acid chain; its full sequence is Elongation factor G (707 aa).

The region spanning 8–297 (ERVRNIGIAA…AVLDYLPSPL (290 aa)) is the tr-type G domain. GTP-binding positions include 17 to 24 (AHIDAGKT), 96 to 100 (DTPGH), and 150 to 153 (NKMD).

The protein belongs to the TRAFAC class translation factor GTPase superfamily. Classic translation factor GTPase family. EF-G/EF-2 subfamily.

It is found in the cytoplasm. Catalyzes the GTP-dependent ribosomal translocation step during translation elongation. During this step, the ribosome changes from the pre-translocational (PRE) to the post-translocational (POST) state as the newly formed A-site-bound peptidyl-tRNA and P-site-bound deacylated tRNA move to the P and E sites, respectively. Catalyzes the coordinated movement of the two tRNA molecules, the mRNA and conformational changes in the ribosome. This Gloeobacter violaceus (strain ATCC 29082 / PCC 7421) protein is Elongation factor G.